A 402-amino-acid chain; its full sequence is Sulfate adenylyltransferase (402 aa).

The protein belongs to the sulfate adenylyltransferase family.

The enzyme catalyses sulfate + ATP + H(+) = adenosine 5'-phosphosulfate + diphosphate. Its pathway is sulfur metabolism; hydrogen sulfide biosynthesis; sulfite from sulfate: step 1/3. This Vesicomyosocius okutanii subsp. Calyptogena okutanii (strain HA) protein is Sulfate adenylyltransferase.